The chain runs to 106 residues: Small ribosomal subunit protein uS10 (106 aa).

This sequence belongs to the universal ribosomal protein uS10 family. Part of the 30S ribosomal subunit.

Functionally, involved in the binding of tRNA to the ribosomes. This is Small ribosomal subunit protein uS10 from Synechococcus sp. (strain CC9902).